The following is a 426-amino-acid chain: Glutamate-1-semialdehyde 2,1-aminomutase (426 aa).

N6-(pyridoxal phosphate)lysine is present on K265.

The protein belongs to the class-III pyridoxal-phosphate-dependent aminotransferase family. HemL subfamily. As to quaternary structure, homodimer. It depends on pyridoxal 5'-phosphate as a cofactor.

The protein resides in the cytoplasm. It catalyses the reaction (S)-4-amino-5-oxopentanoate = 5-aminolevulinate. Its pathway is porphyrin-containing compound metabolism; protoporphyrin-IX biosynthesis; 5-aminolevulinate from L-glutamyl-tRNA(Glu): step 2/2. The sequence is that of Glutamate-1-semialdehyde 2,1-aminomutase from Sodalis glossinidius (strain morsitans).